The following is a 721-amino-acid chain: Mitogen-activated protein kinase 6 (721 aa).

A Peptide (Met-Gly) (interchain with G-Cter in ubiquitin) cross-link involves residue Met-1. In terms of domain architecture, Protein kinase spans 20–316; sequence YMDLKPLGCG…AEEALSHPYM (297 aa). Residues 26–34 and Lys-49 contribute to the ATP site; that span reads LGCGGNGLV. Asp-152 functions as the Proton acceptor in the catalytic mechanism. Ser-189 is modified (phosphoserine; by PAK1, PAK2 and PAK3). An SEG motif motif is present at residues 189–191; it reads SEG. The FRIEDE motif motif lies at 332–337; that stretch reads FHIEDE. A phosphoserine mark is found at Ser-386, Ser-452, Ser-556, Ser-558, Ser-665, and Ser-684. Residues 701-715 show a composition bias toward polar residues; it reads AMKSSPQIPHQTYSS. The disordered stretch occupies residues 701–721; it reads AMKSSPQIPHQTYSSILKHLN.

This sequence belongs to the protein kinase superfamily. CMGC Ser/Thr protein kinase family. MAP kinase subfamily. Heterodimer with ERK4/MAPK4. Interacts with (via FRIEDE motif) MAPKAPK5. Interacts with UBE3A; this interaction may be indirect and mediated by HERC2, possibly via HERC2 interaction with NEURL4. The cofactor is Mg(2+). In terms of processing, phosphorylated at Ser-189 by PAK1, PAK2 and PAK3 resulting in catalytic activation. Phosphorylated by MAPKAPK5 at other sites. Ubiquitination at Met-1 leads to degradation by the proteasome pathway. In terms of tissue distribution, highest expression in the skeletal muscle, followed by the brain. Also found in heart, placenta, lung, liver, pancreas, kidney and skin fibroblasts.

It localises to the cytoplasm. The protein resides in the nucleus. It carries out the reaction L-seryl-[protein] + ATP = O-phospho-L-seryl-[protein] + ADP + H(+). The catalysed reaction is L-threonyl-[protein] + ATP = O-phospho-L-threonyl-[protein] + ADP + H(+). Activated by phosphorylation at Ser-189. Its function is as follows. Atypical MAPK protein. Phosphorylates microtubule-associated protein 2 (MAP2) and MAPKAPK5. The precise role of the complex formed with MAPKAPK5 is still unclear, but the complex follows a complex set of phosphorylation events: upon interaction with atypical MAPKAPK5, ERK3/MAPK6 is phosphorylated at Ser-189 and then mediates phosphorylation and activation of MAPKAPK5, which in turn phosphorylates ERK3/MAPK6. May promote entry in the cell cycle. In Homo sapiens (Human), this protein is Mitogen-activated protein kinase 6 (MAPK6).